A 547-amino-acid chain; its full sequence is Agglutinin-1 (547 aa).

The first 20 residues, 1–20 (MKFETTKNKLHGNAYYQAQF), serve as a signal peptide directing secretion. The residue at position 21 (glutamine 21) is a Pyrrolidone carboxylic acid. Glutamate 183 is an active-site residue. 3 disulfides stabilise this stretch: cysteine 266-cysteine 288, cysteine 305-cysteine 324, and cysteine 348-cysteine 365. Residues 279–280 (RS) constitute a propeptide, linker peptide. Positions 292–419 (YEPTVRIGGR…YRMRQGWRTG (128 aa)) constitute a Ricin B-type lectin 1 domain. The 1-alpha repeat unit spans residues 302-344 (DGLCVDVSDNAYNNGNPIILWKCKDQLEVNQLWTLKSDKTIRS). The stretch at 345 to 385 (KGKCLTTYGYAPGNYVMIYDCSSAVAEATYWDIWDNGTIIN) is one 1-beta repeat. 2 N-linked (GlcNAc...) asparagine glycosylation sites follow: asparagine 380 and asparagine 420. The 1-gamma repeat unit spans residues 388–420 (SGLVLSAESSSMGGTLTVQKNDYRMRQGWRTGN). The Ricin B-type lectin 2 domain maps to 422–546 (TSPFVTSIAG…GNANQMWATL (125 aa)). One copy of the 2-alpha repeat lies at 433–468 (FKLCMEAHGNSMWLDVCDITKEEQQWAVYPDGSIRP). Disulfide bonds link cysteine 436–cysteine 449 and cysteine 475–cysteine 492. A 2-beta repeat occupies 472–511 (TNNCLTCEEHKQGATIVMMGCSNAWASQRWVFKSDGTIYN). A 2-gamma repeat occupies 514-547 (DDMVMDVKSSDPSLKQIILWPYTGNANQMWATLF).

This sequence in the N-terminal section; belongs to the ribosome-inactivating protein family. Type 2 RIP subfamily. Heterotetramer of two A and two B chains.

The catalysed reaction is Endohydrolysis of the N-glycosidic bond at one specific adenosine on the 28S rRNA.. Its function is as follows. The A chain is responsible for inhibiting protein synthesis through the catalytic inactivation of 60S ribosomal subunits by removing adenine from position 4,324 of 28S rRNA. Less toxic than abrin-a. Functionally, the B chain is a galactose-specific lectin that facilitates the binding to the cell membrane that precedes endocytosis. The chain is Agglutinin-1 from Abrus precatorius (Indian licorice).